The chain runs to 125 residues: Fluoride-specific ion channel FluC (125 aa).

The next 4 membrane-spanning stretches (helical) occupy residues 5–25 (IFLVGIGGGIGSVLRFVVSLL), 33–53 (IFPLTTFVVNLLGCFFVGILV), 66–86 (VKIFFITGFCGGFTTFSSFSL), and 100–120 (LVLYILINIIAGCAAVLLGYI). 2 residues coordinate Na(+): Gly76 and Thr79.

The protein belongs to the fluoride channel Fluc/FEX (TC 1.A.43) family.

It is found in the cell inner membrane. The enzyme catalyses fluoride(in) = fluoride(out). With respect to regulation, na(+) is not transported, but it plays an essential structural role and its presence is essential for fluoride channel function. Its function is as follows. Fluoride-specific ion channel. Important for reducing fluoride concentration in the cell, thus reducing its toxicity. The sequence is that of Fluoride-specific ion channel FluC from Azobacteroides pseudotrichonymphae genomovar. CFP2.